We begin with the raw amino-acid sequence, 156 residues long: Iron sulfur cluster assembly protein 2, mitochondrial (156 aa).

Residues 1–26 constitute a mitochondrion transit peptide; that stretch reads MFARLANPAHFKPLTGSHITRAAKRL.

The protein belongs to the NifU family. As to quaternary structure, component of the core Fe-S cluster (ISC) assembly machinery. Interacts with frataxin. Interacts with the mitochondrial co-chaperones JAC1 and SSQ1. Interacts with NFS1. Interacts with ferredoxin YAH1; interacts with the reduced form. [2Fe-2S] cluster serves as cofactor.

It localises to the mitochondrion matrix. It participates in cofactor biosynthesis; iron-sulfur cluster biosynthesis. Its function is as follows. Scaffold protein for the de novo synthesis of iron-sulfur (Fe-S) clusters within mitochondria, which is required for maturation of both mitochondrial and cytoplasmic [2Fe-2S] and [4Fe-4S] proteins. First, a [2Fe-2S] cluster is transiently assembled on the scaffold proteins ISU1 and ISU2. In a second step, the cluster is released from ISU1/ISU2, transferred to glutaredoxin GRX5, followed by the formation of mitochondrial [2Fe-2S] proteins, the synthesis of [4Fe-4S] clusters and their target-specific insertion into the recipient apoproteins. Cluster assembly on ISU1/ISU2 depends on the function of the cysteine desulfurase complex NFS1-ISD11, which serves as the sulfur donor for cluster synthesis, the iron-binding protein frataxin (YFH1) as the putative iron donor, and the electron transfer chain comprised of ferredoxin reductase ARH1 and ferredoxin YAH1, which receive their electrons from NADH. Fe-S cluster release from ISU1/ISU2 is achieved by interaction with the Hsp70 chaperone SSQ1, assisted by the DnaJ-like co-chaperone JAC1 and the nucleotide exchange factor MGE1. ISU1 is the major isoform in yeast, while ISU2 is not detectable in cells grown to stationary phase. Also involved in production of a sulfur precursor required for thiolation of cytoplasmic tRNAs. The polypeptide is Iron sulfur cluster assembly protein 2, mitochondrial (Saccharomyces cerevisiae (strain ATCC 204508 / S288c) (Baker's yeast)).